Here is a 371-residue protein sequence, read N- to C-terminus: Tetraacyldisaccharide 4'-kinase (371 aa).

48–55 (SAGGTGKT) contributes to the ATP binding site.

It belongs to the LpxK family.

It catalyses the reaction a lipid A disaccharide + ATP = a lipid IVA + ADP + H(+). The protein operates within glycolipid biosynthesis; lipid IV(A) biosynthesis; lipid IV(A) from (3R)-3-hydroxytetradecanoyl-[acyl-carrier-protein] and UDP-N-acetyl-alpha-D-glucosamine: step 6/6. Transfers the gamma-phosphate of ATP to the 4'-position of a tetraacyldisaccharide 1-phosphate intermediate (termed DS-1-P) to form tetraacyldisaccharide 1,4'-bis-phosphate (lipid IVA). The chain is Tetraacyldisaccharide 4'-kinase from Chlorobium chlorochromatii (strain CaD3).